A 197-amino-acid polypeptide reads, in one-letter code: MSLSIDVTSLPSISSSIFKNESSSATSTLSGKSIGRSEQYISPDVEAFNKYMLSKSPEDIGPSDSASNDPLTSFSIRSNAVKTNADAGVSMDSSTQSRPSSNVGCDQLDFSLNKGINVSANLDSCISISTDHKKEKSKKDKSRKHYPRIEADSDSEDYVLDDSDSDDGKCKNCKYKKKYFALRMRMKQVAMQLIEDL.

Low complexity predominate over residues 17-33; that stretch reads IFKNESSSATSTLSGKS. Positions 17–36 are disordered; it reads IFKNESSSATSTLSGKSIGR. Residue serine 67 is modified to Phosphoserine; by host CK1. Aspartate 92 is a binding site for Mg(2+). The interval 131-166 is disordered; sequence DHKKEKSKKDKSRKHYPRIEADSDSEDYVLDDSDSD. The span at 152–165 shows a compositional bias: acidic residues; it reads DSDSEDYVLDDSDS. Residues serine 153, serine 155, serine 163, and serine 165 each carry the phosphoserine; by host modification.

It belongs to the rotavirus NSP5 family. In terms of assembly, homodimer. Interacts with VP1. Interacts with VP2. Interacts with NSP2; this interaction leads to up-regulation of NSP5 hyperphosphorylation and formation of virus factories. Interacts with NSP6. Participates in the selective exclusion of host proteins from stress granules (SG) and P bodies (PB). Also participates in the sequestration of these remodeled organelles in viral factories. The cofactor is Mg(2+). Post-translationally, O-glycosylated. Hyperphosphorylated on serine residues, when in dimeric form. Phosphorylation by host CK1 is required for the hyperphosphorylation of NSP5 dimer.

It is found in the host cytoplasm. In terms of biological role, plays an essential role in the viral genome replication. Participates, together with NSP2, in the formation of viral factories (viroplasms), which are large inclusions in the host cytoplasm where replication intermediates are assembled and viral RNA replication takes place. Orchestrates the recruitment of viroplasmic proteins such as capsid proteins to these factories. Participates in the selective exclusion of host proteins from stress granules (SG) and P bodies (PB). Also participates in the sequestration of these remodeled organelles in viral factories. This is Non-structural protein 5 from Homo sapiens (Human).